The sequence spans 504 residues: Activin receptor type-1-like (504 aa).

An N-terminal signal peptide occupies residues 1–20 (MTLGIFRRVFLMLSVALGLT). Topologically, residues 21 to 121 (KGDLVKPSRG…EEPEVDAHLP (101 aa)) are extracellular. N34 carries an N-linked (GlcNAc...) asparagine glycan. Cystine bridges form between C35-C52, C37-C42, and C47-C70. Residues 74-77 (NQEL) are mediates specificity for BMP ligand. Intrachain disulfides connect C78/C90 and C91/C96. Residue N99 is glycosylated (N-linked (GlcNAc...) asparagine). The chain crosses the membrane as a helical span at residues 122–142 (LILGPVLALLVLVALGTLGLW). At 143–504 (RVRRRQEKQR…QNPEKPKVIH (362 aa)) the chain is on the cytoplasmic side. A phosphoserine mark is found at S156, S161, and S162. The GS domain occupies 173–202 (SMLGDFLVSDCTTGSGSGLPFLVQRTVARQ). Residues 203–504 (VALVECVGKG…QNPEKPKVIH (302 aa)) form the Protein kinase domain. ATP-binding positions include 209 to 217 (VGKGRYGEV) and K230. Residue D331 is the Proton acceptor of the active site.

It belongs to the protein kinase superfamily. TKL Ser/Thr protein kinase family. TGFB receptor subfamily. In terms of assembly, interacts with TSC22D1/TSC-22. The cofactor is Mg(2+). Mn(2+) is required as a cofactor. Urogenital ridge, testis, ovary, brain and lung. In lung, found exclusively in pulmonary vessels of all sizes. Also expressed in aorta, vena cava and certain blood vessels of kidney, spleen, heart and intestine. For most blood vessels, a higher level of expression is found in endothelium than in adjacent smooth muscle.

The protein localises to the cell membrane. The enzyme catalyses L-threonyl-[receptor-protein] + ATP = O-phospho-L-threonyl-[receptor-protein] + ADP + H(+). It catalyses the reaction L-seryl-[receptor-protein] + ATP = O-phospho-L-seryl-[receptor-protein] + ADP + H(+). Type I receptor for TGF-beta family ligands BMP9/GDF2 and BMP10 and important regulator of normal blood vessel development. On ligand binding, forms a receptor complex consisting of two type II and two type I transmembrane serine/threonine kinases. Type II receptors phosphorylate and activate type I receptors which autophosphorylate, then bind and activate SMAD transcriptional regulators. May bind activin as well. In Rattus norvegicus (Rat), this protein is Activin receptor type-1-like (Acvrl1).